Here is a 168-residue protein sequence, read N- to C-terminus: Auxin-responsive protein IAA1 (168 aa).

The disordered stretch occupies residues 1–74; it reads MEVTNGLNLK…NRKNNNNKNV (74 aa). Residues 14 to 18 carry the EAR-like (transcriptional repression) motif; the sequence is LRLGL. A compositionally biased stretch (polar residues) spans 23-34; sequence EEQQLELSCVRS. Residues 74–161 enclose the PB1 domain; it reads VSYVKVSMDG…SCQKLRIMKG (88 aa).

It belongs to the Aux/IAA family. In terms of assembly, homodimers and heterodimers. Interacts with the auxin-responsive protein IAA2. Interacts with TPL. Phosphorylated by phytochrome A in vitro. Preferentially expressed in stems, leaves and flowers.

The protein localises to the nucleus. In terms of biological role, aux/IAA proteins are short-lived transcriptional factors that function as repressors of early auxin response genes at low auxin concentrations. Repression is thought to result from the interaction with auxin response factors (ARFs), proteins that bind to the auxin-responsive promoter element (AuxRE). Formation of heterodimers with ARF proteins may alter their ability to modulate early auxin response genes expression. This chain is Auxin-responsive protein IAA1 (IAA1), found in Arabidopsis thaliana (Mouse-ear cress).